A 526-amino-acid chain; its full sequence is MLO-like protein 1 (526 aa).

The Extracellular segment spans residues 1–11; sequence MGHGGEGMSLE. A helical transmembrane segment spans residues 12-32; that stretch reads FTPTWVVAGVCTVIVAISLAV. Topologically, residues 33–61 are cytoplasmic; sequence ERLLHYFGTVLKKKKQKPLYEALQKVKEE. A helical transmembrane segment spans residues 62–82; sequence LMLLGFISLLLTVFQGLISKF. Residues 83–160 are Extracellular-facing; it reads CVKENVLMHM…LSLEALHHLH (78 aa). A helical transmembrane segment spans residues 161 to 181; it reads IFIFVLAISHVTFCVLTVIFG. Residues 182-287 are Cytoplasmic-facing; sequence STRIHQWKKW…MRALEDDFKQ (106 aa). A run of 2 helical transmembrane segments spans residues 288-308 and 309-329; these read VVGISWYLWIFVVIFLLLNVN and GWHTYFWIAFIPFALLLAVGT. The Cytoplasmic segment spans residues 330–372; sequence KLEHVIAQLAHEVAEKHVAIEGDLVVKPSDEHFWFSKPQIVLY. The chain crosses the membrane as a helical span at residues 373–393; sequence LIHFILFQNAFEIAFFFWIWV. The Extracellular segment spans residues 394-412; sequence TYGFDSCIMGQVRYIVPRL. Residues 413–433 form a helical membrane-spanning segment; that stretch reads VIGVFIQVLCSYSTLPLYAIV. At 434-526 the chain is on the cytoplasmic side; sequence SQMGSSFKKA…NNEITPDHNN (93 aa). The tract at residues 447–468 is calmodulin-binding; it reads ENVQVGLVGWAQKVKQKRDLKA. Residues 471-526 form a disordered region; sequence SNGDEGSSQAGPGPDSGSGSAPAAGPGAGFAGIQLSRVTRNNAGDTNNEITPDHNN. Low complexity predominate over residues 476–495; the sequence is GSSQAGPGPDSGSGSAPAAG. Over residues 506 to 520 the composition is skewed to polar residues; the sequence is SRVTRNNAGDTNNEI.

This sequence belongs to the MLO family.

The protein localises to the cell membrane. May be involved in modulation of pathogen defense and leaf cell death. Activity seems to be regulated by Ca(2+)-dependent calmodulin binding and seems not to require heterotrimeric G proteins. This is MLO-like protein 1 (MLO1) from Arabidopsis thaliana (Mouse-ear cress).